A 338-amino-acid chain; its full sequence is MAAAEAEVVSPLIVDTAPDTSGTAEASVAASVAEAARTESQAPASKAALAAKLMSLSGVFAVHKPKGPTSAELLNRLKEKLLAEAGMPSPEWNKRQKQTLKVGHGGTLDSAAQGVLVVGIGRGTKMLTSMLSGSKRYITIGELGKATDTLDSTGKVTEEKPYDKITREDIEGILQKFTGNIMQVPPLYSALKKDGQRLSTLMKKGKVVEARPARPVTVHSISLLKFQPPFFTLDVECGGGFYIRSLVSDIGKELSSCASVLELTRTKQGPFTLAQHALPEDRWTIDDIEQSLERCTSLLPEELTFKKLKSDNSSDQVISCGYITLRDTKREDDAVKTL.

The residue at position 2 (A2) is an N-acetylalanine. The active-site Nucleophile is D109.

Belongs to the pseudouridine synthase TruB family.

Its subcellular location is the nucleus. The protein resides in the cytoplasm. It localises to the cytosol. The enzyme catalyses a uridine in mRNA = a pseudouridine in mRNA. It carries out the reaction a uridine in tRNA = a pseudouridine in tRNA. It catalyses the reaction uridine(55) in tRNA = pseudouridine(55) in tRNA. Functionally, pseudouridine synthase that catalyzes pseudouridylation of mRNAs and tRNAs. Mediates pseudouridylation of mRNAs with the consensus sequence 5'-GUUCNANNC-3', harboring a stem-loop structure. Constitutes the major pseudouridine synthase acting on mRNAs. Also catalyzes pseudouridylation of some tRNAs, including synthesis of pseudouridine(55) from uracil-55, in the psi GC loop of a subset of tRNAs. Promotes the processing of pri-let-7 microRNAs (pri-miRNAs) independently of its RNA pseudouridylate synthase activity. Acts by binding to the stem-loop structure on pri-let-7, preventing LIN28-binding (LIN28A and/or LIN28B), thereby enhancing the interaction between pri-let-7 and the microprocessor DGCR8, which mediates miRNA maturation. The polypeptide is Pseudouridylate synthase TRUB1 (Mus musculus (Mouse)).